The following is a 219-amino-acid chain: OVARIAN TUMOR DOMAIN-containing deubiquitinating enzyme 12 (219 aa).

Residues 79–203 form the OTU domain; it reads LCELKVSGDG…EVHYNSLYDI (125 aa). The active site involves D87. C90 serves as the catalytic Nucleophile. Residue H196 is part of the active site.

It belongs to the peptidase C85 family.

The catalysed reaction is Thiol-dependent hydrolysis of ester, thioester, amide, peptide and isopeptide bonds formed by the C-terminal Gly of ubiquitin (a 76-residue protein attached to proteins as an intracellular targeting signal).. Its function is as follows. Hydrolase that can remove conjugated ubiquitin from proteins in vitro and may therefore play an important regulatory role at the level of protein turnover by preventing degradation. Inactive cysteine protease. The chain is OVARIAN TUMOR DOMAIN-containing deubiquitinating enzyme 12 from Arabidopsis thaliana (Mouse-ear cress).